The following is a 103-amino-acid chain: Integration host factor subunit beta (103 aa).

The segment at 62-81 (RNPKTGESVALPGKHVPHFK) is disordered.

It belongs to the bacterial histone-like protein family. Heterodimer of an alpha and a beta chain.

This protein is one of the two subunits of integration host factor, a specific DNA-binding protein that functions in genetic recombination as well as in transcriptional and translational control. This is Integration host factor subunit beta from Xanthomonas axonopodis pv. citri (strain 306).